The sequence spans 329 residues: Flotillin-like protein FloA (329 aa).

A helical membrane pass occupies residues 4–24 (IWGFLILILVLIFLGVFFSFV).

This sequence belongs to the flotillin-like FloA family. In terms of assembly, homooligomerizes.

The protein localises to the cell membrane. The protein resides in the membrane raft. Its function is as follows. Found in functional membrane microdomains (FMM) that may be equivalent to eukaryotic membrane rafts. FMMs are highly dynamic and increase in number as cells age. Flotillins are thought to be important factors in membrane fluidity. The sequence is that of Flotillin-like protein FloA from Dictyoglomus turgidum (strain DSM 6724 / Z-1310).